A 207-amino-acid polypeptide reads, in one-letter code: Na(+)-translocating NADH-quinone reductase subunit D (207 aa).

The next 6 helical transmembrane spans lie at 20–40 (IALQ…LQTA), 41–61 (FVMA…ISMI), 69–89 (IRII…DQIL), 102–122 (VFVG…AFAM), 130–150 (FVDG…VAFL), and 177–197 (NGLF…IWAI).

The protein belongs to the NqrDE/RnfAE family. In terms of assembly, composed of six subunits; NqrA, NqrB, NqrC, NqrD, NqrE and NqrF.

It localises to the cell inner membrane. It catalyses the reaction a ubiquinone + n Na(+)(in) + NADH + H(+) = a ubiquinol + n Na(+)(out) + NAD(+). Its function is as follows. NQR complex catalyzes the reduction of ubiquinone-1 to ubiquinol by two successive reactions, coupled with the transport of Na(+) ions from the cytoplasm to the periplasm. NqrA to NqrE are probably involved in the second step, the conversion of ubisemiquinone to ubiquinol. The chain is Na(+)-translocating NADH-quinone reductase subunit D from Haemophilus ducreyi (strain 35000HP / ATCC 700724).